Consider the following 262-residue polypeptide: Aminoglycoside (3'') (9) adenylyltransferase (262 aa).

Residues 1–157 form an adenylyltransferase domain region; sequence MTLSIPPSIQ…ERAERLFTPA (157 aa). 3 residues coordinate ATP: serine 36, serine 46, and aspartate 47. Positions 47, 49, and 87 each coordinate Mg(2+). Glutamate 87 serves as the catalytic Proton acceptor. An ATP-binding site is contributed by aspartate 130. The helical domain stretch occupies residues 158 to 262; that stretch reads PAAQLLKALR…AKAHIPTQFT (105 aa). Streptomycin contacts are provided by residues 173 to 178 and histidine 185; that span reads WQSTAD. Positions 205 and 231 each coordinate ATP.

Monomer.

The catalysed reaction is streptomycin + ATP = 3''-O-adenylylstreptomycin + diphosphate. It carries out the reaction spectinomycin + ATP = 9-O-adenylylspectinomycin + diphosphate. Mediates bacterial resistance to the antibiotics streptomycin and spectinomycin, does not confer resistance to kanamycin. Binds ATP first, then antibiotic. This is Aminoglycoside (3'') (9) adenylyltransferase (aadA) from Salmonella typhimurium (strain LT2 / SGSC1412 / ATCC 700720).